Reading from the N-terminus, the 408-residue chain is LL-diaminopimelate aminotransferase (408 aa).

Y15 and G42 together coordinate substrate. Pyridoxal 5'-phosphate-binding positions include Y72, 108–109 (AK), Y132, N186, Y217, and 245–247 (SFS). Substrate contacts are provided by K109, Y132, and N186. K248 carries the N6-(pyridoxal phosphate)lysine modification. R256 and N291 together coordinate pyridoxal 5'-phosphate. Residues N291 and R386 each contribute to the substrate site.

Belongs to the class-I pyridoxal-phosphate-dependent aminotransferase family. LL-diaminopimelate aminotransferase subfamily. As to quaternary structure, homodimer. Requires pyridoxal 5'-phosphate as cofactor.

The catalysed reaction is (2S,6S)-2,6-diaminopimelate + 2-oxoglutarate = (S)-2,3,4,5-tetrahydrodipicolinate + L-glutamate + H2O + H(+). It participates in amino-acid biosynthesis; L-lysine biosynthesis via DAP pathway; LL-2,6-diaminopimelate from (S)-tetrahydrodipicolinate (aminotransferase route): step 1/1. In terms of biological role, involved in the synthesis of meso-diaminopimelate (m-DAP or DL-DAP), required for both lysine and peptidoglycan biosynthesis. Catalyzes the direct conversion of tetrahydrodipicolinate to LL-diaminopimelate. The sequence is that of LL-diaminopimelate aminotransferase from Desulfotalea psychrophila (strain LSv54 / DSM 12343).